Here is a 183-residue protein sequence, read N- to C-terminus: Acireductone dioxygenase (183 aa).

4 residues coordinate Fe(2+): histidine 95, histidine 97, glutamate 101, and histidine 139. Ni(2+) is bound by residues histidine 95, histidine 97, glutamate 101, and histidine 139.

Belongs to the acireductone dioxygenase (ARD) family. In terms of assembly, monomer. Requires Fe(2+) as cofactor. The cofactor is Ni(2+).

It catalyses the reaction 1,2-dihydroxy-5-(methylsulfanyl)pent-1-en-3-one + O2 = 3-(methylsulfanyl)propanoate + CO + formate + 2 H(+). The enzyme catalyses 1,2-dihydroxy-5-(methylsulfanyl)pent-1-en-3-one + O2 = 4-methylsulfanyl-2-oxobutanoate + formate + 2 H(+). It participates in amino-acid biosynthesis; L-methionine biosynthesis via salvage pathway; L-methionine from S-methyl-5-thio-alpha-D-ribose 1-phosphate: step 5/6. Functionally, catalyzes 2 different reactions between oxygen and the acireductone 1,2-dihydroxy-3-keto-5-methylthiopentene (DHK-MTPene) depending upon the metal bound in the active site. Fe-containing acireductone dioxygenase (Fe-ARD) produces formate and 2-keto-4-methylthiobutyrate (KMTB), the alpha-ketoacid precursor of methionine in the methionine recycle pathway. Ni-containing acireductone dioxygenase (Ni-ARD) produces methylthiopropionate, carbon monoxide and formate, and does not lie on the methionine recycle pathway. This chain is Acireductone dioxygenase, found in Aquifex aeolicus (strain VF5).